Here is a 124-residue protein sequence, read N- to C-terminus: Large ribosomal subunit protein eL31 (124 aa).

It belongs to the eukaryotic ribosomal protein eL31 family. In terms of assembly, component of the large ribosomal subunit.

The protein localises to the cytoplasm. Functionally, component of the large ribosomal subunit. The ribosome is a large ribonucleoprotein complex responsible for the synthesis of proteins in the cell. The chain is Large ribosomal subunit protein eL31 (rpl31) from Paralichthys olivaceus (Bastard halibut).